We begin with the raw amino-acid sequence, 537 residues long: MNQGTKSILLAATLAAIPWQVYGSIEQSSLLPIPPMGFNNWARFMCDLNETLFTETADAMAANGLRDAGYNRINLDDCWMAYQRSDNGSLQWNTTKFPHGLPWLAQYVKAKGFHFGIYEDSGNMTCGGYPGSYNHEEQDANTFALWGIDYLKLDGCNVYATQGRTLEEEYKQRYGHWHQVLSKMQHPLIFSESAPAYFAGTDNNTDWYTVMDWVPIYGELARHSTDILVYSGAGSAWDSIMNNYNYNTLLARYQRPGYFNDPDFLIPDHPGLTADEKRSHFALWASFSAPLIISAYIPALSKDEIAFLTNEALIAVNQDPLAQQATFASRDNTLDILTRNLANGDRLLTVLNKGNTTVTRDIPVQWLGLTETDCTYTAEDLWDGKTQKISDHIKIELASHATAVFRLGLPQGCSSVVPTGLVFNTASGNCLTAASNSSVAFQSCNGETSQIWQVTLSGVIRPVSQTTQCLAADGNSVKLQACDSTDSDGQNWTYAVTGNLKNAKTDGCLTEGSVQMKSCLYERDGQVFGLPSGVQLS.

Positions 1–23 (MNQGTKSILLAATLAAIPWQVYG) are cleaved as a signal peptide. Cys-46 and Cys-78 are oxidised to a cystine. Asn-49, Asn-87, Asn-93, and Asn-123 each carry an N-linked (GlcNAc...) asparagine glycan. Cys-126 and Cys-156 are disulfide-bonded. The Nucleophile role is filled by Asp-154. Asn-203 carries N-linked (GlcNAc...) asparagine glycosylation. Asp-212 serves as the catalytic Proton donor. N-linked (GlcNAc...) asparagine glycans are attached at residues Asn-355 and Asn-436. Residues 413-537 (CSSVVPTGLV…FGLPSGVQLS (125 aa)) enclose the Ricin B-type lectin domain. 2 disulfides stabilise this stretch: Cys-430-Cys-444 and Cys-469-Cys-482. A glycan (N-linked (GlcNAc...) asparagine) is linked at Asn-491.

It belongs to the glycosyl hydrolase 27 family.

Its subcellular location is the secreted. The catalysed reaction is Hydrolysis of terminal, non-reducing alpha-D-galactose residues in alpha-D-galactosides, including galactose oligosaccharides, galactomannans and galactolipids.. Hydrolyzes a variety of simple alpha-D-galactoside as well as more complex molecules such as oligosaccharides and polysaccharides. This is Probable alpha-galactosidase A (aglA) from Aspergillus niger (strain ATCC MYA-4892 / CBS 513.88 / FGSC A1513).